A 244-amino-acid chain; its full sequence is Venom nerve growth factor 2 (244 aa).

Positions 1 to 18 (MSMLCYTLIIAFLIGIWA) are cleaved as a signal peptide. A propeptide spanning residues 19 to 125 (APKSEDNVPL…TLNRNIRAKR (107 aa)) is cleaved from the precursor. A compositionally biased stretch (basic and acidic residues) spans 47-66 (GLKTSRNTDQRHPAPKKAED). Residues 47–69 (GLKTSRNTDQRHPAPKKAEDQEL) form a disordered region. Cystine bridges form between C139–C205 and C181–C233.

Belongs to the NGF-beta family. Homodimer; non-covalently linked. Expressed by the venom gland.

The protein localises to the secreted. Its function is as follows. Nerve growth factor is important for the development and maintenance of the sympathetic and sensory nervous systems. It stimulates division and differentiation of sympathetic and embryonic sensory neurons as well as basal forebrain cholinergic neurons in the brain. Its relevance in the snake venom is not clear. However, it has been shown to inhibit metalloproteinase-dependent proteolysis of platelet glycoprotein Ib alpha, suggesting a metalloproteinase inhibition to prevent metalloprotease autodigestion and/or protection against prey proteases. Binds a lipid between the two protein chains in the homodimer. The lipid-bound form promotes histamine relase from mouse mast cells, contrary to the lipid-free form. The sequence is that of Venom nerve growth factor 2 from Notechis scutatus scutatus (Mainland tiger snake).